A 481-amino-acid polypeptide reads, in one-letter code: Arf-GAP domain and FG repeat-containing protein 2 (481 aa).

The 127-residue stretch at 27 to 153 (EVWCRRVREL…WYVPPDQVKG (127 aa)) folds into the Arf-GAP domain. Residues 47-70 (CFECAQRGVTYVDITVGSFVCTTC) form a C4-type zinc finger. Disordered regions lie at residues 150–220 (QVKG…SVKK), 271–309 (SSVF…APAS), and 431–481 (QQNG…NPFL). Over residues 157-166 (TKGSASTPVQ) the composition is skewed to polar residues. The residue at position 173 (Lys-173) is an N6-acetyllysine. Composition is skewed to polar residues over residues 188–210 (VAAS…ARST), 283–298 (ASFQ…SQGT), and 454–481 (AGIS…NPFL).

As to quaternary structure, interacts with EPS15R.

The sequence is that of Arf-GAP domain and FG repeat-containing protein 2 (AGFG2) from Homo sapiens (Human).